The chain runs to 193 residues: MYQDLIRNELNEAAETLANFLQDEANIHAIQRAAVLLADSFKAGGKVLSCGNGGSHCDAMHFAEELTGRYRENRPGYPAIAISDVSHLSCVSNDFGYEYVFSRYVESVGRAGDVLLGISTSGNSGNVIKAIEAARAQGMKVITLTGKDGGKMAGSADVEIRVPHFGYADRIQEIHIKVIHILIMLIEKEMAKG.

The region spanning 37-193 (LADSFKAGGK…MLIEKEMAKG (157 aa)) is the SIS domain. 52–54 (NGG) contributes to the substrate binding site. Zn(2+)-binding residues include H61 and E65. Residues E65, 93 to 94 (ND), 119 to 121 (STS), S124, and Q172 contribute to the substrate site. Residues Q172 and H180 each contribute to the Zn(2+) site.

The protein belongs to the SIS family. GmhA subfamily. Homotetramer. Zn(2+) is required as a cofactor.

The protein resides in the cytoplasm. The enzyme catalyses 2 D-sedoheptulose 7-phosphate = D-glycero-alpha-D-manno-heptose 7-phosphate + D-glycero-beta-D-manno-heptose 7-phosphate. Its pathway is carbohydrate biosynthesis; D-glycero-D-manno-heptose 7-phosphate biosynthesis; D-glycero-alpha-D-manno-heptose 7-phosphate and D-glycero-beta-D-manno-heptose 7-phosphate from sedoheptulose 7-phosphate: step 1/1. In terms of biological role, catalyzes the isomerization of sedoheptulose 7-phosphate in D-glycero-D-manno-heptose 7-phosphate. The protein is Phosphoheptose isomerase of Klebsiella pneumoniae subsp. pneumoniae (strain ATCC 700721 / MGH 78578).